Consider the following 503-residue polypeptide: GMP synthase [glutamine-hydrolyzing] (503 aa).

The Glutamine amidotransferase type-1 domain occupies methionine 1–aspartate 189. Cysteine 78 (nucleophile) is an active-site residue. Catalysis depends on residues histidine 164 and glutamate 166. The region spanning tryptophan 190–arginine 378 is the GMPS ATP-PPase domain. Serine 217 to serine 223 contributes to the ATP binding site.

In terms of assembly, homodimer.

It catalyses the reaction XMP + L-glutamine + ATP + H2O = GMP + L-glutamate + AMP + diphosphate + 2 H(+). The protein operates within purine metabolism; GMP biosynthesis; GMP from XMP (L-Gln route): step 1/1. In terms of biological role, catalyzes the synthesis of GMP from XMP. This Thermus thermophilus (strain ATCC BAA-163 / DSM 7039 / HB27) protein is GMP synthase [glutamine-hydrolyzing].